A 526-amino-acid polypeptide reads, in one-letter code: ATP synthase subunit alpha (526 aa).

Glycine 171–threonine 178 lines the ATP pocket.

The protein belongs to the ATPase alpha/beta chains family. As to quaternary structure, F-type ATPases have 2 components, CF(1) - the catalytic core - and CF(0) - the membrane proton channel. CF(1) has five subunits: alpha(3), beta(3), gamma(1), delta(1), epsilon(1). CF(0) has four main subunits: a, b, b' and c.

Its subcellular location is the cell inner membrane. The catalysed reaction is ATP + H2O + 4 H(+)(in) = ADP + phosphate + 5 H(+)(out). Its function is as follows. Produces ATP from ADP in the presence of a proton gradient across the membrane. The alpha chain is a regulatory subunit. In Pelodictyon phaeoclathratiforme (strain DSM 5477 / BU-1), this protein is ATP synthase subunit alpha.